We begin with the raw amino-acid sequence, 95 residues long: Acyl carrier protein AcpXL (95 aa).

In terms of domain architecture, Carrier spans 4 to 90 (TATFDKVADI…NLCAKIDELR (87 aa)). Position 39 is an O-(pantetheine 4'-phosphoryl)serine (serine 39).

In terms of processing, 4'-phosphopantetheine is transferred from CoA to a specific serine of apo-ACP by AcpS. This modification is essential for activity because fatty acids are bound in thioester linkage to the sulfhydryl of the prosthetic group.

It localises to the cytoplasm. It participates in glycolipid biosynthesis; KDO(2)-lipid A biosynthesis. Carrier of the growing fatty acid chain in fatty acid biosynthesis. Is involved in the transfer of long hydroxylated fatty acids to lipid A. In Rhizobium meliloti (strain 1021) (Ensifer meliloti), this protein is Acyl carrier protein AcpXL (acpXL).